Consider the following 470-residue polypeptide: Origin of replication complex subunit 4 (470 aa).

Residue 63-70 participates in ATP binding; that stretch reads GPRGCGKA.

Belongs to the ORC4 family. In terms of assembly, component of the origin recognition complex (ORC) composed of at least ORC1, ORC2, ORC3, ORC4, ORC5 and ORC6. ORC is regulated in a cell-cycle and development dependent manner. It is sequentially assembled at the exit from anaphase of mitosis and disassembled as cells enter S phase. In terms of tissue distribution, expressed in the shoot apical meristem (SAM), leaves, ears and roots (including root tips).

It is found in the nucleus. Functionally, component of the origin recognition complex (ORC) that binds origins of replication. DNA-binding is ATP-dependent. The specific DNA sequences that define origins of replication have not been identified yet. ORC is required to assemble the pre-replication complex necessary to initiate DNA replication. This Oryza sativa subsp. japonica (Rice) protein is Origin of replication complex subunit 4.